The chain runs to 330 residues: GTPase Obg (330 aa).

In terms of domain architecture, Obg spans 1-159 (MHFIDEVKIY…MWIHLRLKLL (159 aa)). The 168-residue stretch at 160 to 327 (SDVGLVGLPN…IVKLALEIIK (168 aa)) folds into the OBG-type G domain. GTP contacts are provided by residues 166–173 (GLPNAGKS), 191–195 (FTTLV), 212–215 (DIPG), 279–282 (NKCD), and 308–310 (STY). Residues Ser-173 and Thr-193 each contribute to the Mg(2+) site.

This sequence belongs to the TRAFAC class OBG-HflX-like GTPase superfamily. OBG GTPase family. Monomer. Mg(2+) is required as a cofactor.

Its subcellular location is the cytoplasm. An essential GTPase which binds GTP, GDP and possibly (p)ppGpp with moderate affinity, with high nucleotide exchange rates and a fairly low GTP hydrolysis rate. Plays a role in control of the cell cycle, stress response, ribosome biogenesis and in those bacteria that undergo differentiation, in morphogenesis control. In Rickettsia typhi (strain ATCC VR-144 / Wilmington), this protein is GTPase Obg.